Consider the following 116-residue polypeptide: Large ribosomal subunit protein bL19 (116 aa).

It belongs to the bacterial ribosomal protein bL19 family.

This protein is located at the 30S-50S ribosomal subunit interface and may play a role in the structure and function of the aminoacyl-tRNA binding site. The sequence is that of Large ribosomal subunit protein bL19 from Solidesulfovibrio magneticus (strain ATCC 700980 / DSM 13731 / RS-1) (Desulfovibrio magneticus).